Consider the following 257-residue polypeptide: UPF0246 protein Spro_0686 (257 aa).

The protein belongs to the UPF0246 family.

The sequence is that of UPF0246 protein Spro_0686 from Serratia proteamaculans (strain 568).